The primary structure comprises 270 residues: Flavin-dependent thymidylate synthase (270 aa).

Positions 13–218 constitute a ThyX domain; it reads GFVRLVDQMG…PLAWAAFEEH (206 aa). Residues Ser-59, 82-84, and Glu-90 contribute to the FAD site; that span reads RHR. DUMP-binding positions include 79–82, 90–94, and Arg-157; these read QWFR and EISGR. The ThyX motif signature appears at 82–92; it reads RHRTASVNEIS. FAD contacts are provided by residues 173–175 and His-179; that span reads DLH. Residue Arg-184 coordinates dUMP. Arg-184 functions as the Involved in ionization of N3 of dUMP, leading to its activation in the catalytic mechanism.

This sequence belongs to the thymidylate synthase ThyX family. Homotetramer. Requires FAD as cofactor.

The enzyme catalyses dUMP + (6R)-5,10-methylene-5,6,7,8-tetrahydrofolate + NADPH + H(+) = dTMP + (6S)-5,6,7,8-tetrahydrofolate + NADP(+). Its pathway is pyrimidine metabolism; dTTP biosynthesis. Functionally, catalyzes the reductive methylation of 2'-deoxyuridine-5'-monophosphate (dUMP) to 2'-deoxythymidine-5'-monophosphate (dTMP) while utilizing 5,10-methylenetetrahydrofolate (mTHF) as the methyl donor, and NADPH and FADH(2) as the reductant. The sequence is that of Flavin-dependent thymidylate synthase from Thermus thermophilus (strain ATCC BAA-163 / DSM 7039 / HB27).